The following is a 160-amino-acid chain: Cytochrome b6-f complex subunit 4 (160 aa).

3 helical membrane passes run 36-56 (LLYI…GLAV), 95-115 (LLGI…PFIE), and 128-148 (IAMA…IGAC).

It belongs to the cytochrome b family. PetD subfamily. The 4 large subunits of the cytochrome b6-f complex are cytochrome b6, subunit IV (17 kDa polypeptide, PetD), cytochrome f and the Rieske protein, while the 4 small subunits are PetG, PetL, PetM and PetN. The complex functions as a dimer.

It localises to the cellular thylakoid membrane. In terms of biological role, component of the cytochrome b6-f complex, which mediates electron transfer between photosystem II (PSII) and photosystem I (PSI), cyclic electron flow around PSI, and state transitions. The protein is Cytochrome b6-f complex subunit 4 of Prochlorococcus marinus (strain MIT 9303).